Reading from the N-terminus, the 263-residue chain is uncharacterized protein (263 aa).

Transmembrane regions (helical) follow at residues 53–73, 103–123, 130–150, 153–173, 181–201, 213–233, and 241–261; these read FWII…LVKI, GFLF…LPGL, IILP…VFSY, LIPA…EPLW, FILV…IQIL, MLAA…ILTP, and LLLS…LFLI.

This sequence belongs to the TatC family.

It localises to the plastid. It is found in the chloroplast membrane. This is an uncharacterized protein from Trieres chinensis (Marine centric diatom).